The following is a 187-amino-acid chain: 1,6-anhydro-N-acetylmuramyl-L-alanine amidase AmpD (187 aa).

Residues 30-167 enclose the N-acetylmuramoyl-L-alanine amidase domain; the sequence is LLVVHNISLP…APERKTDPGP (138 aa). His-34 provides a ligand contact to Zn(2+). The active-site Proton acceptor is the Glu-116. 2 residues coordinate Zn(2+): His-154 and Asp-164.

Belongs to the N-acetylmuramoyl-L-alanine amidase 2 family. Zn(2+) serves as cofactor.

The protein localises to the cytoplasm. The enzyme catalyses Hydrolyzes the link between N-acetylmuramoyl residues and L-amino acid residues in certain cell-wall glycopeptides.. With respect to regulation, amidase activity is inhibited by metal chelators such as EDTA, dipicolinic acid or 1,10-phenanthroline. Its function is as follows. Involved in cell wall peptidoglycan recycling. Specifically cleaves the amide bond between the lactyl group of N-acetylmuramic acid and the alpha-amino group of the L-alanine in degradation products containing an anhydro N-acetylmuramyl moiety. Is also involved in beta-lactamase induction. The protein is 1,6-anhydro-N-acetylmuramyl-L-alanine amidase AmpD of Citrobacter freundii.